Here is a 246-residue protein sequence, read N- to C-terminus: Mediator of RNA polymerase II transcription subunit 6 (246 aa).

Disordered stretches follow at residues 165–186 and 207–246; these read MKKK…RSTN and EALE…ATTK. Composition is skewed to basic and acidic residues over residues 166-184 and 208-224; these read KKKE…EERS and ALEK…KPEE.

It belongs to the Mediator complex subunit 6 family. Component of the Mediator complex. Interacts with let-19/mdt-13. Interacts with RNA polymerase II. Interacts with mdt-28.

It localises to the nucleus. In terms of biological role, component of the Mediator complex, a coactivator involved in the regulated transcription of nearly all RNA polymerase II-dependent genes. Mediator functions as a bridge to convey information from gene-specific regulatory proteins to the basal RNA polymerase II transcription machinery. Mediator is recruited to promoters by direct interactions with regulatory proteins and serves as a scaffold for the assembly of a functional preinitiation complex with RNA polymerase II and the general transcription factors. The sequence is that of Mediator of RNA polymerase II transcription subunit 6 (mdt-6) from Caenorhabditis briggsae.